We begin with the raw amino-acid sequence, 93 residues long: Acylphosphatase (93 aa).

An intrachain disulfide couples Cys-5 to Cys-49. The region spanning 5–93 is the Acylphosphatase-like domain; the sequence is CTIAWIYGRV…ETLTDFSIRY (89 aa). Catalysis depends on residues Arg-20 and Asn-38.

The protein belongs to the acylphosphatase family.

It carries out the reaction an acyl phosphate + H2O = a carboxylate + phosphate + H(+). The sequence is that of Acylphosphatase from Salmonella arizonae (strain ATCC BAA-731 / CDC346-86 / RSK2980).